Here is a 189-residue protein sequence, read N- to C-terminus: Small ribosomal subunit protein uS5 (189 aa).

In terms of domain architecture, S5 DRBM spans 22–85; it reads FVDKLVAINR…EAAKRDLIFV (64 aa).

This sequence belongs to the universal ribosomal protein uS5 family. Part of the 30S ribosomal subunit. Contacts proteins S4 and S8.

With S4 and S12 plays an important role in translational accuracy. Functionally, located at the back of the 30S subunit body where it stabilizes the conformation of the head with respect to the body. The polypeptide is Small ribosomal subunit protein uS5 (Sinorhizobium medicae (strain WSM419) (Ensifer medicae)).